Reading from the N-terminus, the 48-residue chain is Light-harvesting polypeptide B-885 beta-2 chain (48 aa).

At 1-20 (AEDRKSLSGLTEQEAQEFGT) the chain is on the cytoplasmic side. The helical transmembrane segment at 21–43 (LYTQGVAFVAVIAIVAHALVWAW) threads the bilayer. Residue His-37 coordinates a bacteriochlorophyll. The Periplasmic segment spans residues 44 to 48 (RPWLQ).

This sequence belongs to the antenna complex beta subunit family. As to quaternary structure, the core complex is formed by different alpha and beta chains, binding bacteriochlorophyll molecules, and arranged most probably in tetrameric structures disposed around the reaction center. The non-pigmented gamma chains may constitute additional components.

It localises to the cell inner membrane. In terms of biological role, antenna complexes are light-harvesting systems, which transfer the excitation energy to the reaction centers. In Rhodocyclus tenuis (Rhodospirillum tenue), this protein is Light-harvesting polypeptide B-885 beta-2 chain.